Consider the following 234-residue polypeptide: Triosephosphate isomerase (234 aa).

Residue 8-10 (NFK) participates in substrate binding. The Electrophile role is filled by His-90. The active-site Proton acceptor is Glu-159. Gly-165 and Ser-197 together coordinate substrate.

Belongs to the triosephosphate isomerase family. As to quaternary structure, homodimer.

The protein localises to the cytoplasm. It carries out the reaction D-glyceraldehyde 3-phosphate = dihydroxyacetone phosphate. It participates in carbohydrate biosynthesis; gluconeogenesis. The protein operates within carbohydrate degradation; glycolysis; D-glyceraldehyde 3-phosphate from glycerone phosphate: step 1/1. Its function is as follows. Involved in the gluconeogenesis. Catalyzes stereospecifically the conversion of dihydroxyacetone phosphate (DHAP) to D-glyceraldehyde-3-phosphate (G3P). This Helicobacter pylori (strain J99 / ATCC 700824) (Campylobacter pylori J99) protein is Triosephosphate isomerase.